The chain runs to 140 residues: Profilin (140 aa).

Ser-2 carries the N-acetylserine modification.

It belongs to the profilin family. As to quaternary structure, occurs in many kinds of cells as a complex with monomeric actin in a 1:1 ratio.

It is found in the cytoplasm. The protein localises to the cytoskeleton. Functionally, binds to actin and affects the structure of the cytoskeleton. At high concentrations, profilin prevents the polymerization of actin, whereas it enhances it at low concentrations. By binding to PIP2, it inhibits the formation of IP3 and DG. The protein is Profilin of Clypeaster japonicus (Sand dollar).